The primary structure comprises 246 residues: NAD-dependent protein deacylase (246 aa).

Residues 1–245 (MKEFITKHRD…ELIREILDNP (245 aa)) enclose the Deacetylase sirtuin-type domain. Residue 20–39 (GAGISAESGIPTFRGSEGLW) participates in NAD(+) binding. 2 residues coordinate substrate: tyrosine 64 and arginine 67. 98–101 (QNVD) contributes to the NAD(+) binding site. Histidine 116 acts as the Proton acceptor in catalysis. Zn(2+) contacts are provided by cysteine 124, cysteine 127, cysteine 146, and cysteine 149. Residues 186–188 (GTS), 212–214 (NPE), and threonine 230 each bind NAD(+).

The protein belongs to the sirtuin family. Class III subfamily. Requires Zn(2+) as cofactor.

Its subcellular location is the cytoplasm. The catalysed reaction is N(6)-acetyl-L-lysyl-[protein] + NAD(+) + H2O = 2''-O-acetyl-ADP-D-ribose + nicotinamide + L-lysyl-[protein]. It catalyses the reaction N(6)-succinyl-L-lysyl-[protein] + NAD(+) + H2O = 2''-O-succinyl-ADP-D-ribose + nicotinamide + L-lysyl-[protein]. Its function is as follows. NAD-dependent lysine deacetylase and desuccinylase that specifically removes acetyl and succinyl groups on target proteins. Modulates the activities of several proteins which are inactive in their acylated form. This Leptospira interrogans serogroup Icterohaemorrhagiae serovar copenhageni (strain Fiocruz L1-130) protein is NAD-dependent protein deacylase.